A 180-amino-acid polypeptide reads, in one-letter code: Cytidylate kinase (180 aa).

An ATP-binding site is contributed by 7–15 (GLPGSGTTT).

It belongs to the cytidylate kinase family. Type 2 subfamily.

The protein localises to the cytoplasm. The catalysed reaction is CMP + ATP = CDP + ADP. It carries out the reaction dCMP + ATP = dCDP + ADP. This chain is Cytidylate kinase, found in Methanosarcina acetivorans (strain ATCC 35395 / DSM 2834 / JCM 12185 / C2A).